The sequence spans 108 residues: ATP-dependent Clp protease adapter protein ClpS (108 aa).

Residues Met1–Val15 are compositionally biased toward basic and acidic residues. The interval Met1 to Pro22 is disordered.

It belongs to the ClpS family. In terms of assembly, binds to the N-terminal domain of the chaperone ClpA.

Its function is as follows. Involved in the modulation of the specificity of the ClpAP-mediated ATP-dependent protein degradation. This chain is ATP-dependent Clp protease adapter protein ClpS, found in Stenotrophomonas maltophilia (strain K279a).